Consider the following 1053-residue polypeptide: Carbamoyl phosphate synthase large chain (1053 aa).

Residues 1 to 397 form a carboxyphosphate synthetic domain region; the sequence is MPKNTSLKKV…GFKKALRSLD (397 aa). Residues Arg-127, Arg-167, Gly-173, Gly-174, Glu-206, Val-208, Glu-213, Gly-239, Val-240, His-241, Gln-282, and Glu-294 each coordinate ATP. An ATP-grasp 1 domain is found at 131–323; that stretch reads KKLMLEIGEP…IARVAAKVAI (193 aa). Mg(2+) is bound by residues Gln-282, Glu-294, and Asn-296. Mn(2+) contacts are provided by Gln-282, Glu-294, and Asn-296. Residues 398-530 form an oligomerization domain region; that stretch reads TDIYRHTDLN…YSTWEQECEL (133 aa). The segment at 531-919 is carbamoyl phosphate synthetic domain; the sequence is TQSDRKKILI…YKASQAADNT (389 aa). Residues 661–852 enclose the ATP-grasp 2 domain; sequence SVLLDQNNIP…LAKIAAKLML (192 aa). The ATP site is built by Arg-697, Arg-736, Leu-738, Glu-743, Gly-768, Val-769, His-770, Ser-771, Gln-811, and Glu-823. 3 residues coordinate Mg(2+): Gln-811, Glu-823, and Asn-825. Residues Gln-811, Glu-823, and Asn-825 each contribute to the Mn(2+) site. Positions 918 to 1053 constitute an MGS-like domain; the sequence is NTIPLKGNVF…TVEPLSHYHS (136 aa). The interval 920-1053 is allosteric domain; it reads IPLKGNVFIS…TVEPLSHYHS (134 aa).

It belongs to the CarB family. As to quaternary structure, composed of two chains; the small (or glutamine) chain promotes the hydrolysis of glutamine to ammonia, which is used by the large (or ammonia) chain to synthesize carbamoyl phosphate. Tetramer of heterodimers (alpha,beta)4. Mg(2+) serves as cofactor. It depends on Mn(2+) as a cofactor.

The enzyme catalyses hydrogencarbonate + L-glutamine + 2 ATP + H2O = carbamoyl phosphate + L-glutamate + 2 ADP + phosphate + 2 H(+). The catalysed reaction is hydrogencarbonate + NH4(+) + 2 ATP = carbamoyl phosphate + 2 ADP + phosphate + 2 H(+). It functions in the pathway amino-acid biosynthesis; L-arginine biosynthesis; carbamoyl phosphate from bicarbonate: step 1/1. The protein operates within pyrimidine metabolism; UMP biosynthesis via de novo pathway; (S)-dihydroorotate from bicarbonate: step 1/3. In terms of biological role, large subunit of the glutamine-dependent carbamoyl phosphate synthetase (CPSase). CPSase catalyzes the formation of carbamoyl phosphate from the ammonia moiety of glutamine, carbonate, and phosphate donated by ATP, constituting the first step of 2 biosynthetic pathways, one leading to arginine and/or urea and the other to pyrimidine nucleotides. The large subunit (synthetase) binds the substrates ammonia (free or transferred from glutamine from the small subunit), hydrogencarbonate and ATP and carries out an ATP-coupled ligase reaction, activating hydrogencarbonate by forming carboxy phosphate which reacts with ammonia to form carbamoyl phosphate. In Methanocorpusculum labreanum (strain ATCC 43576 / DSM 4855 / Z), this protein is Carbamoyl phosphate synthase large chain.